Consider the following 184-residue polypeptide: NADH-quinone oxidoreductase subunit B (184 aa).

Residues C63, C64, C128, and C158 each coordinate [4Fe-4S] cluster.

Belongs to the complex I 20 kDa subunit family. As to quaternary structure, NDH-1 is composed of 14 different subunits. Subunits NuoB, C, D, E, F, and G constitute the peripheral sector of the complex. [4Fe-4S] cluster is required as a cofactor.

It is found in the cell inner membrane. The enzyme catalyses a quinone + NADH + 5 H(+)(in) = a quinol + NAD(+) + 4 H(+)(out). Its function is as follows. NDH-1 shuttles electrons from NADH, via FMN and iron-sulfur (Fe-S) centers, to quinones in the respiratory chain. The immediate electron acceptor for the enzyme in this species is believed to be ubiquinone. Couples the redox reaction to proton translocation (for every two electrons transferred, four hydrogen ions are translocated across the cytoplasmic membrane), and thus conserves the redox energy in a proton gradient. The polypeptide is NADH-quinone oxidoreductase subunit B (Xanthomonas axonopodis pv. citri (strain 306)).